The sequence spans 341 residues: tRNA N6-adenosine threonylcarbamoyltransferase (341 aa).

Fe cation is bound by residues His111 and His115. Substrate-binding positions include 134-138 (LVSGG), Asp167, Gly180, and Asn272. Asp300 contacts Fe cation.

Belongs to the KAE1 / TsaD family. Requires Fe(2+) as cofactor.

The protein localises to the cytoplasm. It catalyses the reaction L-threonylcarbamoyladenylate + adenosine(37) in tRNA = N(6)-L-threonylcarbamoyladenosine(37) in tRNA + AMP + H(+). Required for the formation of a threonylcarbamoyl group on adenosine at position 37 (t(6)A37) in tRNAs that read codons beginning with adenine. Is involved in the transfer of the threonylcarbamoyl moiety of threonylcarbamoyl-AMP (TC-AMP) to the N6 group of A37, together with TsaE and TsaB. TsaD likely plays a direct catalytic role in this reaction. This chain is tRNA N6-adenosine threonylcarbamoyltransferase, found in Psychromonas ingrahamii (strain DSM 17664 / CCUG 51855 / 37).